We begin with the raw amino-acid sequence, 320 residues long: Lipoyl synthase (320 aa).

[4Fe-4S] cluster is bound by residues Cys-56, Cys-61, Cys-67, Cys-82, Cys-86, Cys-89, and Ser-295. A Radical SAM core domain is found at 68–284 (WNRRTATFMI…REEALKRGFA (217 aa)). The tract at residues 300–320 (EQSAQAVARRTGAGRAAQTGD) is disordered. A compositionally biased stretch (low complexity) spans 303-320 (AQAVARRTGAGRAAQTGD).

This sequence belongs to the radical SAM superfamily. Lipoyl synthase family. Requires [4Fe-4S] cluster as cofactor.

The protein resides in the cytoplasm. It catalyses the reaction [[Fe-S] cluster scaffold protein carrying a second [4Fe-4S](2+) cluster] + N(6)-octanoyl-L-lysyl-[protein] + 2 oxidized [2Fe-2S]-[ferredoxin] + 2 S-adenosyl-L-methionine + 4 H(+) = [[Fe-S] cluster scaffold protein] + N(6)-[(R)-dihydrolipoyl]-L-lysyl-[protein] + 4 Fe(3+) + 2 hydrogen sulfide + 2 5'-deoxyadenosine + 2 L-methionine + 2 reduced [2Fe-2S]-[ferredoxin]. It functions in the pathway protein modification; protein lipoylation via endogenous pathway; protein N(6)-(lipoyl)lysine from octanoyl-[acyl-carrier-protein]: step 2/2. In terms of biological role, catalyzes the radical-mediated insertion of two sulfur atoms into the C-6 and C-8 positions of the octanoyl moiety bound to the lipoyl domains of lipoate-dependent enzymes, thereby converting the octanoylated domains into lipoylated derivatives. The protein is Lipoyl synthase of Symbiobacterium thermophilum (strain DSM 24528 / JCM 14929 / IAM 14863 / T).